A 164-amino-acid polypeptide reads, in one-letter code: SsrA-binding protein (164 aa).

The protein belongs to the SmpB family.

It localises to the cytoplasm. Functionally, required for rescue of stalled ribosomes mediated by trans-translation. Binds to transfer-messenger RNA (tmRNA), required for stable association of tmRNA with ribosomes. tmRNA and SmpB together mimic tRNA shape, replacing the anticodon stem-loop with SmpB. tmRNA is encoded by the ssrA gene; the 2 termini fold to resemble tRNA(Ala) and it encodes a 'tag peptide', a short internal open reading frame. During trans-translation Ala-aminoacylated tmRNA acts like a tRNA, entering the A-site of stalled ribosomes, displacing the stalled mRNA. The ribosome then switches to translate the ORF on the tmRNA; the nascent peptide is terminated with the 'tag peptide' encoded by the tmRNA and targeted for degradation. The ribosome is freed to recommence translation, which seems to be the essential function of trans-translation. The chain is SsrA-binding protein from Shewanella woodyi (strain ATCC 51908 / MS32).